The sequence spans 381 residues: UDP-4-amino-4-deoxy-L-arabinose--oxoglutarate aminotransferase (381 aa).

Lys-182 carries the N6-(pyridoxal phosphate)lysine modification.

This sequence belongs to the DegT/DnrJ/EryC1 family. ArnB subfamily. In terms of assembly, homodimer. Requires pyridoxal 5'-phosphate as cofactor.

It carries out the reaction UDP-4-amino-4-deoxy-beta-L-arabinose + 2-oxoglutarate = UDP-beta-L-threo-pentopyranos-4-ulose + L-glutamate. It functions in the pathway nucleotide-sugar biosynthesis; UDP-4-deoxy-4-formamido-beta-L-arabinose biosynthesis; UDP-4-deoxy-4-formamido-beta-L-arabinose from UDP-alpha-D-glucuronate: step 2/3. The protein operates within bacterial outer membrane biogenesis; lipopolysaccharide biosynthesis. Catalyzes the conversion of UDP-4-keto-arabinose (UDP-Ara4O) to UDP-4-amino-4-deoxy-L-arabinose (UDP-L-Ara4N). The modified arabinose is attached to lipid A and is required for resistance to polymyxin and cationic antimicrobial peptides. This is UDP-4-amino-4-deoxy-L-arabinose--oxoglutarate aminotransferase from Edwardsiella ictaluri (strain 93-146).